A 437-amino-acid polypeptide reads, in one-letter code: Palmitoyltransferase PFA4 (437 aa).

Topologically, residues 1–12 are cytoplasmic; it reads MAGLNDVPFIKG. Residues 13-33 form a helical membrane-spanning segment; that stretch reads LAVPSVCALIIFLGYASQFLF. The Lumenal segment spans residues 34–48; that stretch reads NYSTTLEPGPPTRRE. The chain crosses the membrane as a helical span at residues 49 to 69; that stretch reads TIIFNGLLLVLWITYYRTVAT. Residues 70-130 lie on the Cytoplasmic side of the membrane; that stretch reads DPGRYIFKDR…RNCVSMTTFP (61 aa). The region spanning 87-137 is the DHHC domain; the sequence is RWCNKCAAPKPPRAHHCRHCARCVPRMDHHCPWTRNCVSMTTFPHFLRFLI. Cysteine 117 acts as the S-palmitoyl cysteine intermediate in catalysis. A helical membrane pass occupies residues 131-151; it reads HFLRFLIYTNMSLWMLGYFLW. At 152–173 the chain is on the lumenal side; it reads QRFSKIWEHRRLPAYLGPSFYG. Residues 174–194 traverse the membrane as a helical segment; it reads LICLSLISIVNFVTTVALGIM. At 195–437 the chain is on the cytoplasmic side; the sequence is LINTVKSWVF…KILKKDGLDD (243 aa). The segment at 377-419 is disordered; it reads LDQGLGWVNSDGDRLRDYGVDEEASEPEGVNDDDDDDDDDDVP. Over residues 396 to 419 the composition is skewed to acidic residues; sequence VDEEASEPEGVNDDDDDDDDDDVP.

The protein belongs to the DHHC palmitoyltransferase family. PFA4 subfamily.

Its subcellular location is the endoplasmic reticulum membrane. The catalysed reaction is L-cysteinyl-[protein] + hexadecanoyl-CoA = S-hexadecanoyl-L-cysteinyl-[protein] + CoA. Its function is as follows. Mediates the reversible addition of palmitate to target proteins, thereby regulating their membrane association and biological function. The polypeptide is Palmitoyltransferase PFA4 (Gibberella zeae (strain ATCC MYA-4620 / CBS 123657 / FGSC 9075 / NRRL 31084 / PH-1) (Wheat head blight fungus)).